Reading from the N-terminus, the 147-residue chain is Hemoglobin subunit beta (147 aa).

The Globin domain occupies 3–147; sequence EWTDDERAII…VVSALGRQYH (145 aa). The heme b site is built by His64 and His93.

This sequence belongs to the globin family. Heterotetramer of two alpha chains and two beta chains. In terms of tissue distribution, red blood cells.

Involved in oxygen transport from gills to the various peripheral tissues. The protein is Hemoglobin subunit beta (hbb) of Merlangius merlangus (Whiting).